Reading from the N-terminus, the 266-residue chain is Apolipoprotein A-I (266 aa).

The first 18 residues, 1–18 (MKAVVLTLAVLFLTGSQA), serve as a signal peptide directing secretion. 2 repeat units span residues 67-88 (LKLL…EQIG) and 89-110 (PVTQ…QEMS). The 10 X approximate tandem repeats stretch occupies residues 67 to 266 (LKLLDNWDSL…DEAAKKLNTQ (200 aa)). At methionine 109 the chain carries Methionine sulfoxide. One copy of the 3; half-length repeat lies at 111-121 (KDLEEVKQKVQ). A run of 5 repeats spans residues 122-143 (PYLD…QKVA), 144-165 (PLGT…EKLT), 166-187 (PLGE…AHLA), 188-209 (PYSD…EGGS), and 210-231 (ASLA…EKAK). A 9; half-length repeat occupies 232 to 242 (PALEDLRQGLL). The stretch at 243-266 (PVLESFKVSLLAAVDEAAKKLNTQ) is repeat 10.

Belongs to the apolipoprotein A1/A4/E family. Homodimer. Interacts with APOA1BP and CLU. Component of a sperm activating protein complex (SPAP), consisting of APOA1, an immunoglobulin heavy chain, an immunoglobulin light chain and albumin. Interacts with NDRG1. Interacts with SCGB3A2. Interacts with NAXE and YJEFN3. Post-translationally, glycosylated. Palmitoylated. In terms of processing, phosphorylation sites are present in the extracellular medium.

Its subcellular location is the secreted. Its function is as follows. Participates in the reverse transport of cholesterol from tissues to the liver for excretion by promoting cholesterol efflux from tissues and by acting as a cofactor for the lecithin cholesterol acyltransferase (LCAT). As part of the SPAP complex, activates spermatozoa motility. The sequence is that of Apolipoprotein A-I (APOA1) from Mustela putorius furo (European domestic ferret).